Consider the following 193-residue polypeptide: MANMKNSNDRIILFRKAGEKVDATKMLFLTEYGLSHEADTDTEDTMDGSYNTGGSVESTMSGTAKMFYGDDFADEIEDAVVDRVLYEAWEVESRIPGKNGDATKFKAKYFQGFHNKFELKAEANGIDEYEYEYGVNGRFQRGFATLPEAVTKKLKATGYRFHDTTKADALTGEDLTAIPQPKVDSSTVTPGEV.

It is found in the virion. The protein is Putative tail protein of Staphylococcus phage phiMR25.